The following is a 337-amino-acid chain: Pyruvate dehydrogenase E1 component subunit beta (337 aa).

Glu73 provides a ligand contact to thiamine diphosphate.

In terms of assembly, heterodimer of an alpha and a beta chain. It depends on thiamine diphosphate as a cofactor.

The enzyme catalyses N(6)-[(R)-lipoyl]-L-lysyl-[protein] + pyruvate + H(+) = N(6)-[(R)-S(8)-acetyldihydrolipoyl]-L-lysyl-[protein] + CO2. Functionally, the pyruvate dehydrogenase complex catalyzes the overall conversion of pyruvate to acetyl-CoA and CO(2). It contains multiple copies of three enzymatic components: pyruvate dehydrogenase (E1), dihydrolipoamide acetyltransferase (E2) and lipoamide dehydrogenase (E3). In Leifsonia xyli subsp. xyli (strain CTCB07), this protein is Pyruvate dehydrogenase E1 component subunit beta (pdhB).